We begin with the raw amino-acid sequence, 215 residues long: 3-isopropylmalate dehydratase small subunit (215 aa).

It belongs to the LeuD family. LeuD type 1 subfamily. In terms of assembly, heterodimer of LeuC and LeuD.

The catalysed reaction is (2R,3S)-3-isopropylmalate = (2S)-2-isopropylmalate. Its pathway is amino-acid biosynthesis; L-leucine biosynthesis; L-leucine from 3-methyl-2-oxobutanoate: step 2/4. Its function is as follows. Catalyzes the isomerization between 2-isopropylmalate and 3-isopropylmalate, via the formation of 2-isopropylmaleate. The polypeptide is 3-isopropylmalate dehydratase small subunit (Hahella chejuensis (strain KCTC 2396)).